Consider the following 317-residue polypeptide: MAFRWAIQMALRRGGGGGQRLLLTQHQHQNYQFFKTSSSTQFSTRNSQILDLDTPQKSPNFSENSKNKKSKKIEWSTGSILMLGLPAFAFSLGVWQIYRLIWKLELIEHLKSRLSQEAIELPDDLSSSSLEPLEYCRVRVTGEFLHQKEFVISPRGRFDPAKKTSASVGSMLSENEMSSHGGHLITPFRLKNTGKVILINRGWLPTFYFDPESHAKTNPQGTVILEAIVRKTEQRPQFVGQNVPEQGVWYYRDLEQMAKWHGTEPVWLDAAYETTVPGGPIGGQTNINVRNEHMNYLTTWFTLTLVTMLMWIHKFRK.

A run of 2 helical transmembrane segments spans residues 78–98 (GSIL…WQIY) and 293–313 (HMNY…MWIH).

The protein belongs to the SURF1 family.

The protein resides in the mitochondrion inner membrane. In terms of biological role, probably involved in the biogenesis of the COX complex. This Caenorhabditis briggsae protein is SURF1-like protein (sft-1).